The chain runs to 379 residues: tRNA-specific 2-thiouridylase MnmA (379 aa).

Residues alanine 9–serine 16 and methionine 35 each bind ATP. The interval asparagine 94–aspartate 96 is interaction with target base in tRNA. The active-site Nucleophile is cysteine 99. Cysteines 99 and 195 form a disulfide. Glycine 123 is a binding site for ATP. Positions lysine 145–glutamine 147 are interaction with tRNA. Residue cysteine 195 is the Cysteine persulfide intermediate of the active site. Residues arginine 307–tyrosine 308 are interaction with tRNA.

It belongs to the MnmA/TRMU family.

It is found in the cytoplasm. It catalyses the reaction S-sulfanyl-L-cysteinyl-[protein] + uridine(34) in tRNA + AH2 + ATP = 2-thiouridine(34) in tRNA + L-cysteinyl-[protein] + A + AMP + diphosphate + H(+). Its function is as follows. Catalyzes the 2-thiolation of uridine at the wobble position (U34) of tRNA, leading to the formation of s(2)U34. The polypeptide is tRNA-specific 2-thiouridylase MnmA (Xylella fastidiosa (strain 9a5c)).